A 501-amino-acid chain; its full sequence is MFDNILEQQRIEKAKELKNLGINPYPHFLEKEMSLKTFKDRFSYILEQVEKRDESVNAVVAGRLKLLRIAGKSIFANIEDEDTNLQIYFSKDSVGEELYTILKKNLEVGDIVLVKGFPFVTKTGEFSLHASEVKLATKAIVPLPEKYHGLTDIEQRYRKRYVDMIMNAEVRKDFLVRSKVVSLIRHFFENKGFLEVETPMMHPIAGGANAKPFVTFHNSLGVERFLRIAPELYLKRLVVGGFEAVFEINRCFRNEGMDLTHNPEFTTIEFYWAYHNYKDLMDLTEELFALLLDKLNLGKTIEFDGKMIDFSKPFERITYKDALCKYGGLDRDLIEDKEKILTKLKADGFEANEKLELGHLQAELFDNYVEEKLINPTFVIDFPISISPLSRRSDEDSQIAERFELFICGRELANGFNELNDPLDQYERFLKQIEAKNAGDEEACEMDEDFVNALGYGMPPTAGQGIGIDRLVMLLTNKKSIRDVILFPAMRPLKSELKEKE.

Residues Glu404 and Glu411 each coordinate Mg(2+).

Belongs to the class-II aminoacyl-tRNA synthetase family. As to quaternary structure, homodimer. Mg(2+) serves as cofactor.

The protein resides in the cytoplasm. It carries out the reaction tRNA(Lys) + L-lysine + ATP = L-lysyl-tRNA(Lys) + AMP + diphosphate. This is Lysine--tRNA ligase from Campylobacter jejuni (strain RM1221).